The chain runs to 179 residues: Adenine phosphoribosyltransferase (179 aa).

Belongs to the purine/pyrimidine phosphoribosyltransferase family. Homodimer.

It is found in the cytoplasm. The catalysed reaction is AMP + diphosphate = 5-phospho-alpha-D-ribose 1-diphosphate + adenine. The protein operates within purine metabolism; AMP biosynthesis via salvage pathway; AMP from adenine: step 1/1. Functionally, catalyzes a salvage reaction resulting in the formation of AMP, that is energically less costly than de novo synthesis. This Dinoroseobacter shibae (strain DSM 16493 / NCIMB 14021 / DFL 12) protein is Adenine phosphoribosyltransferase.